Consider the following 390-residue polypeptide: Large ribosomal subunit protein uL3y (390 aa).

The disordered stretch occupies residues 1-36 (MSHRKFEHPRHGSLGFLPRKRASRHRGKVKAFPKDD). Over residues 18 to 31 (PRKRASRHRGKVKA) the composition is skewed to basic residues.

The protein belongs to the universal ribosomal protein uL3 family.

It localises to the cytoplasm. The chain is Large ribosomal subunit protein uL3y (ARP2) from Arabidopsis thaliana (Mouse-ear cress).